Here is a 130-residue protein sequence, read N- to C-terminus: Con-Ins G2b (130 aa).

Residues 1-23 (MTTSSYFLLVALGLLLYVRQSFS) form the signal peptide. Cystine bridges form between Cys29-Cys100, Cys41-Cys103, Cys53-Cys116, and Cys102-Cys107. A 4-hydroxyproline; partial modification is found at Pro34. A disordered region spans residues 54–77 (EEEEARRGGTNDGGKKRRRASPLR). A propeptide spans 59–92 (RRGGTNDGGKKRRRASPLRKRRRFISMLKARAKR) (c peptide). Positions 68 to 77 (KKRRRASPLR) are enriched in basic residues. Glu111 bears the 4-carboxyglutamate; partial mark.

It belongs to the insulin family. Heterodimer of A and B chains; disulfide-linked. In terms of tissue distribution, expressed by the venom gland.

The protein localises to the secreted. In terms of biological role, this venom insulin, from a fish-hunting cone snail, facilitates prey capture by rapidly inducing hypoglycemic shock. Intraperitoneal injection of this peptide into zebrafish lowers blood glucose with the same potency than human insulin. In vivo, when applied to water, this peptide reduces overall locomotor activity of zebrafish larvae, observed as a significant decrease in the percentage of time spent swimming and movement frequency. This chain is Con-Ins G2b, found in Conus geographus (Geography cone).